A 429-amino-acid polypeptide reads, in one-letter code: Enolase (429 aa).

A (2R)-2-phosphoglycerate-binding site is contributed by Gln-163. Glu-205 functions as the Proton donor in the catalytic mechanism. Mg(2+) contacts are provided by Asp-242, Glu-285, and Asp-312. Residues Lys-337, Arg-366, Ser-367, and Lys-388 each contribute to the (2R)-2-phosphoglycerate site. Lys-337 (proton acceptor) is an active-site residue.

This sequence belongs to the enolase family. It depends on Mg(2+) as a cofactor.

The protein localises to the cytoplasm. It localises to the secreted. The protein resides in the cell surface. It carries out the reaction (2R)-2-phosphoglycerate = phosphoenolpyruvate + H2O. Its pathway is carbohydrate degradation; glycolysis; pyruvate from D-glyceraldehyde 3-phosphate: step 4/5. Functionally, catalyzes the reversible conversion of 2-phosphoglycerate (2-PG) into phosphoenolpyruvate (PEP). It is essential for the degradation of carbohydrates via glycolysis. The sequence is that of Enolase from Aromatoleum aromaticum (strain DSM 19018 / LMG 30748 / EbN1) (Azoarcus sp. (strain EbN1)).